Reading from the N-terminus, the 263-residue chain is Superoxide dismutase [Fe] 3, chloroplastic (263 aa).

Residues 1-41 (MSSCVVTTSCFYTISDSSIRLKSPKLLNLSNQQRRRSLRSR) constitute a chloroplast transit peptide. Fe cation is bound by residues histidine 74, histidine 127, aspartate 211, and histidine 215.

This sequence belongs to the iron/manganese superoxide dismutase family. As to quaternary structure, homodimer. Heterodimer with FSD2. Interacts with MRL7. The cofactor is Fe cation.

The protein resides in the plastid. It is found in the chloroplast thylakoid. The enzyme catalyses 2 superoxide + 2 H(+) = H2O2 + O2. Its activity is regulated as follows. Activated by cpn20/cpn21 (in vitro). Its function is as follows. Destroys superoxide anion radicals which are normally produced within the cells and which are toxic to biological systems. Plays important role in chloroplast development, particularly in the maintenance of thylakoids membranes. Seems to act as a heterodimer with FSD2. This Arabidopsis thaliana (Mouse-ear cress) protein is Superoxide dismutase [Fe] 3, chloroplastic.